The primary structure comprises 327 residues: Glycerol-3-phosphate dehydrogenase [NAD(P)+] (327 aa).

Residues tryptophan 15, arginine 35, and lysine 109 each coordinate NADPH. Lysine 109, glycine 137, and serine 139 together coordinate sn-glycerol 3-phosphate. Residue alanine 141 coordinates NADPH. Sn-glycerol 3-phosphate contacts are provided by lysine 192, aspartate 245, serine 255, arginine 256, and asparagine 257. Lysine 192 serves as the catalytic Proton acceptor. Arginine 256 serves as a coordination point for NADPH. NADPH contacts are provided by leucine 275 and glutamate 277.

It belongs to the NAD-dependent glycerol-3-phosphate dehydrogenase family.

It localises to the cytoplasm. The catalysed reaction is sn-glycerol 3-phosphate + NAD(+) = dihydroxyacetone phosphate + NADH + H(+). The enzyme catalyses sn-glycerol 3-phosphate + NADP(+) = dihydroxyacetone phosphate + NADPH + H(+). Its pathway is membrane lipid metabolism; glycerophospholipid metabolism. Functionally, catalyzes the reduction of the glycolytic intermediate dihydroxyacetone phosphate (DHAP) to sn-glycerol 3-phosphate (G3P), the key precursor for phospholipid synthesis. This Chelativorans sp. (strain BNC1) protein is Glycerol-3-phosphate dehydrogenase [NAD(P)+].